We begin with the raw amino-acid sequence, 365 residues long: 4-hydroxy-3-methylbut-2-en-1-yl diphosphate synthase (flavodoxin) (365 aa).

Residues cysteine 265, cysteine 268, cysteine 300, and glutamate 307 each coordinate [4Fe-4S] cluster.

This sequence belongs to the IspG family. It depends on [4Fe-4S] cluster as a cofactor.

It catalyses the reaction (2E)-4-hydroxy-3-methylbut-2-enyl diphosphate + oxidized [flavodoxin] + H2O + 2 H(+) = 2-C-methyl-D-erythritol 2,4-cyclic diphosphate + reduced [flavodoxin]. The protein operates within isoprenoid biosynthesis; isopentenyl diphosphate biosynthesis via DXP pathway; isopentenyl diphosphate from 1-deoxy-D-xylulose 5-phosphate: step 5/6. Converts 2C-methyl-D-erythritol 2,4-cyclodiphosphate (ME-2,4cPP) into 1-hydroxy-2-methyl-2-(E)-butenyl 4-diphosphate. This chain is 4-hydroxy-3-methylbut-2-en-1-yl diphosphate synthase (flavodoxin), found in Bacillus mycoides (strain KBAB4) (Bacillus weihenstephanensis).